A 253-amino-acid chain; its full sequence is MGQKINPVGLRLGINRTWDSRWFADGPEYGRLLHEDIKVRRALKKRLYQAGVSRIIIERPHKKCRITIYAARPGVIIGKKGADIEKLRKDVAAMTDGEVHLNIVEIRKPETDAQLIAENIAQQLERRVAFRRAMKRSMQSAMRLGAKGVRINVSGRLGGAEIARMEWYREGRVPLHTLRADVDYGFTEAKTTYGVIGVKVWVFKGEVLEHDPMALDKRLAGESGPAGEGGGRERGDRPDRGPRRERRGEPSNA.

One can recognise a KH type-2 domain in the interval 39–107; the sequence is VRRALKKRLY…EVHLNIVEIR (69 aa). The interval 215-253 is disordered; the sequence is LDKRLAGESGPAGEGGGRERGDRPDRGPRRERRGEPSNA. Positions 230 to 253 are enriched in basic and acidic residues; that stretch reads GGRERGDRPDRGPRRERRGEPSNA.

Belongs to the universal ribosomal protein uS3 family. In terms of assembly, part of the 30S ribosomal subunit. Forms a tight complex with proteins S10 and S14.

Binds the lower part of the 30S subunit head. Binds mRNA in the 70S ribosome, positioning it for translation. This Phenylobacterium zucineum (strain HLK1) protein is Small ribosomal subunit protein uS3.